Here is a 492-residue protein sequence, read N- to C-terminus: Ketol-acid reductoisomerase (NADP(+)) (492 aa).

Positions 17 to 208 (LGQCRLMKKN…GSNKAGVLES (192 aa)) constitute a KARI N-terminal Rossmann domain. NADP(+)-binding positions include 45–48 (CGSQ), Arg-68, Ser-76, and Ser-78. His-132 is a catalytic residue. Gly-158 provides a ligand contact to NADP(+). 2 consecutive KARI C-terminal knotted domains span residues 209 to 344 (SFVA…KAPV) and 345 to 487 (YCET…MKDM). Residues Asp-217, Glu-221, Glu-389, and Glu-393 each contribute to the Mg(2+) site. Residue Ser-414 participates in substrate binding.

Belongs to the ketol-acid reductoisomerase family. It depends on Mg(2+) as a cofactor.

The enzyme catalyses (2R)-2,3-dihydroxy-3-methylbutanoate + NADP(+) = (2S)-2-acetolactate + NADPH + H(+). It catalyses the reaction (2R,3R)-2,3-dihydroxy-3-methylpentanoate + NADP(+) = (S)-2-ethyl-2-hydroxy-3-oxobutanoate + NADPH + H(+). It functions in the pathway amino-acid biosynthesis; L-isoleucine biosynthesis; L-isoleucine from 2-oxobutanoate: step 2/4. Its pathway is amino-acid biosynthesis; L-valine biosynthesis; L-valine from pyruvate: step 2/4. In terms of biological role, involved in the biosynthesis of branched-chain amino acids (BCAA). Catalyzes an alkyl-migration followed by a ketol-acid reduction of (S)-2-acetolactate (S2AL) to yield (R)-2,3-dihydroxy-isovalerate. In the isomerase reaction, S2AL is rearranged via a Mg-dependent methyl migration to produce 3-hydroxy-3-methyl-2-ketobutyrate (HMKB). In the reductase reaction, this 2-ketoacid undergoes a metal-dependent reduction by NADPH to yield (R)-2,3-dihydroxy-isovalerate. The sequence is that of Ketol-acid reductoisomerase (NADP(+)) from Blochmanniella floridana.